A 230-amino-acid polypeptide reads, in one-letter code: Octanoyltransferase (230 aa).

The BPL/LPL catalytic domain maps to 40 to 218 (PSLDDVLILL…CFAEVFGVEL (179 aa)). Residues 82–89 (RGGEVTYH), 149–151 (AIG), and 162–164 (GFA) each bind substrate. The active-site Acyl-thioester intermediate is cysteine 180.

This sequence belongs to the LipB family.

The protein localises to the cytoplasm. The catalysed reaction is octanoyl-[ACP] + L-lysyl-[protein] = N(6)-octanoyl-L-lysyl-[protein] + holo-[ACP] + H(+). Its pathway is protein modification; protein lipoylation via endogenous pathway; protein N(6)-(lipoyl)lysine from octanoyl-[acyl-carrier-protein]: step 1/2. Its function is as follows. Catalyzes the transfer of endogenously produced octanoic acid from octanoyl-acyl-carrier-protein onto the lipoyl domains of lipoate-dependent enzymes. Lipoyl-ACP can also act as a substrate although octanoyl-ACP is likely to be the physiological substrate. The protein is Octanoyltransferase of Nostoc punctiforme (strain ATCC 29133 / PCC 73102).